The primary structure comprises 609 residues: Membrane protein insertase YidC (609 aa).

Residues 9 to 29 (IIAIVLSGLILIAWQYFYNIP) traverse the membrane as a helical segment. The interval 35–63 (RAAQQAQSQTAKSPTEPTPNSPKPDHPAA) is disordered. Transmembrane regions (helical) follow at residues 375–395 (VFGN…AIFF), 449–469 (LPMV…FVTI), 507–527 (LLGP…TMWF), and 546–566 (WMPV…VIYW).

Belongs to the OXA1/ALB3/YidC family. Type 1 subfamily. As to quaternary structure, interacts with the Sec translocase complex via SecD. Specifically interacts with transmembrane segments of nascent integral membrane proteins during membrane integration.

It is found in the cell inner membrane. In terms of biological role, required for the insertion and/or proper folding and/or complex formation of integral membrane proteins into the membrane. Involved in integration of membrane proteins that insert both dependently and independently of the Sec translocase complex, as well as at least some lipoproteins. Aids folding of multispanning membrane proteins. The polypeptide is Membrane protein insertase YidC (Nitrobacter hamburgensis (strain DSM 10229 / NCIMB 13809 / X14)).